The primary structure comprises 835 residues: Protein translocase subunit SecA 1 (835 aa).

Residues glutamine 85, 103 to 107 (GEGKT), and aspartate 492 each bind ATP. The interval 788–807 (VQGEAVHPSSDGEEAKKKPV) is disordered. Zn(2+) contacts are provided by cysteine 819, cysteine 821, cysteine 830, and cysteine 831.

This sequence belongs to the SecA family. Monomer and homodimer. Part of the essential Sec protein translocation apparatus which comprises SecA, SecYEG and auxiliary proteins SecDF. Other proteins may also be involved. Zn(2+) serves as cofactor.

It is found in the cell membrane. The protein resides in the cytoplasm. The enzyme catalyses ATP + H2O + cellular proteinSide 1 = ADP + phosphate + cellular proteinSide 2.. Part of the Sec protein translocase complex. Interacts with the SecYEG preprotein conducting channel. Has a central role in coupling the hydrolysis of ATP to the transfer of proteins into and across the cell membrane, serving as an ATP-driven molecular motor driving the stepwise translocation of polypeptide chains across the membrane. This Bacillus anthracis protein is Protein translocase subunit SecA 1.